The following is a 130-amino-acid chain: Keratin, high-sulfur matrix protein, IIIA3A (130 aa).

In terms of tissue distribution, wool.

In terms of biological role, the keratin products of mammalian epidermal derivatives such as wool and hair consist of microfibrils embedded in a rigid matrix of other proteins. The matrix proteins include the high-sulfur and high-tyrosine keratins, having molecular weights of 6-20 kDa, whereas the microfibrils contain the larger, low-sulfur keratins (40-56 kDa). The chain is Keratin, high-sulfur matrix protein, IIIA3A from Ovis aries (Sheep).